Here is a 179-residue protein sequence, read N- to C-terminus: MKFKPNQTRTYDREGFKKRAACLCFRSEQEDEVLLVSSSRYPDQWIVPGGGMEPEEEPGGAAVREVYEEAGVKGKLGRLLGIFENQDRKHRTYVYVLTVTEILEDWEDSVNIGRKREWFKVEDAIKVLQCHKPVHAEYLEKLKLGCSPTNGNSSVPSLPDNNALFVTAAPPSGVPSSIR.

Residues R9, 17-19 (KKR), and 38-40 (SSR) each bind substrate. A Nudix hydrolase domain is found at 17 to 143 (KKRAACLCFR…VHAEYLEKLK (127 aa)). Mg(2+) is bound by residues G49 and E65. A Nudix box motif is present at residues 50 to 71 (GGMEPEEEPGGAAVREVYEEAG). The active-site Proton acceptor is the E68. Residue E69 coordinates Mg(2+). Residues 88 to 90 (RKH), R114, and K132 contribute to the substrate site.

This sequence belongs to the Nudix hydrolase family. DIPP subfamily. It depends on Mg(2+) as a cofactor. The cofactor is Mn(2+).

Its subcellular location is the cytoplasm. The catalysed reaction is diphospho-myo-inositol polyphosphate + H2O = myo-inositol polyphosphate + phosphate.. The enzyme catalyses 5-diphospho-1D-myo-inositol 1,2,3,4,6-pentakisphosphate + H2O = 1D-myo-inositol hexakisphosphate + phosphate + H(+). It carries out the reaction 3,5-bis(diphospho)-1D-myo-inositol 1,2,4,6-tetrakisphosphate + H2O = 3-diphospho-1D-myo-inositol 1,2,4,5,6-pentakisphosphate + phosphate + 2 H(+). It catalyses the reaction 5-diphospho-1D-myo-inositol 1,3,4,6-tetrakisphosphate + H2O = 1D-myo-inositol 1,3,4,5,6-pentakisphosphate + phosphate + H(+). The catalysed reaction is P(1),P(6)-bis(5'-adenosyl) hexaphosphate + H2O = 2 ATP + 2 H(+). The enzyme catalyses P(1),P(5)-bis(5'-adenosyl) pentaphosphate + H2O = ADP + ATP + 2 H(+). It carries out the reaction 5-phospho-alpha-D-ribose 1-diphosphate + H2O = alpha-D-ribose 1,5-bisphosphate + phosphate + H(+). Functionally, cleaves the beta-phosphate from diphosphoinositol polyphosphates such as PP-InsP5 (diphosphoinositol pentakisphosphate), PP-InsP4 (diphosphoinositol tetrakisphosphate) and [PP]2-InsP4 (bisdiphosphoinositol tetrakisphosphate), suggesting that it may play a role in signal transduction. Diadenosine polyphosphates, particularly Ap6A (P(1),P(6)-bis(5a-adenosyl) hexaphosphate) and Ap5A (P(1),P(5)-bis(5'-adenosyl) pentaphosphate) are downstream effectors of a signaling cascade that regulates cardiac KATP channels, can also be substrates, although with lower preference than the diphosphoinositol polyphosphates. Can also catalyze the hydrolysis of 5-phosphoribose 1-diphosphate, generating the glycolytic activator ribose 1,5-bisphosphate. Does not play a role in U8 snoRNA decapping activity. Binds U8 snoRNA. This is Diphosphoinositol polyphosphate phosphohydrolase 2 from Mus musculus (Mouse).